The sequence spans 307 residues: Protein EI24 homolog (307 aa).

The next 2 helical transmembrane spans lie at 53-73 (FIHC…IYLY) and 92-112 (MFTI…SIIA). Asn135 is a glycosylation site (N-linked (GlcNAc...) asparagine). 4 helical membrane passes run 153-173 (LFGV…TNFI), 175-195 (FVII…ILRG), 225-245 (FFFP…LFII), and 260-280 (GILP…NVIL).

Belongs to the EI24 family.

It is found in the membrane. This Dictyostelium discoideum (Social amoeba) protein is Protein EI24 homolog.